A 296-amino-acid polypeptide reads, in one-letter code: Low affinity immunoglobulin gamma Fc region receptor II (296 aa).

The N-terminal stretch at 1–42 (MGIPSFLAFPAARRNRAHCTPWHPWGHMLLWTALLFLAPVSG) is a signal peptide. The Extracellular segment spans residues 43–225 (KPDLPKAVVT…SSSSGPSSMT (183 aa)). Ig-like C2-type domains lie at 47–129 (PKAV…DVIS) and 130–212 (DWLL…VNIT). Disulfide bonds link C70–C112 and C151–C195. N-linked (GlcNAc...) asparagine glycans are attached at residues N79, N86, N105, N179, N186, and N210. A helical membrane pass occupies residues 226–246 (AVAIGTCFAAVAIVAAIITWF). Over 247 to 296 (RLRRKPISAGLTDAENDAARTEAENTVTYSLLSHPDVAEEDSESDYQKRL) the chain is Cytoplasmic. The short motif at 273–278 (VTYSLL) is the ITIM motif element. Position 275 is a phosphotyrosine; by SRC-type Tyr-kinases (Y275). S288 is modified (phosphoserine). Phosphotyrosine is present on Y292.

Interacts with FGR and LYN. Post-translationally, phosphorylated by SRC-type Tyr-kinases such as LYN, BLK, FYN and SYK. As to expression, higher expression is found in macrophages than in neutrophils.

It is found in the cell membrane. In terms of biological role, binds to the Fc region of immunoglobulins gamma. Low affinity receptor. In Bos taurus (Bovine), this protein is Low affinity immunoglobulin gamma Fc region receptor II (FCGR2).